A 210-amino-acid chain; its full sequence is Urease accessory protein UreG (210 aa).

14-21 (GPVGSGKT) provides a ligand contact to GTP.

The protein belongs to the SIMIBI class G3E GTPase family. UreG subfamily. As to quaternary structure, homodimer. UreD, UreF and UreG form a complex that acts as a GTP-hydrolysis-dependent molecular chaperone, activating the urease apoprotein by helping to assemble the nickel containing metallocenter of UreC. The UreE protein probably delivers the nickel.

It localises to the cytoplasm. In terms of biological role, facilitates the functional incorporation of the urease nickel metallocenter. This process requires GTP hydrolysis, probably effectuated by UreG. In Rhodopseudomonas palustris (strain BisB5), this protein is Urease accessory protein UreG.